The sequence spans 380 residues: Cell division protein FtsZ (380 aa).

GTP is bound by residues 27 to 31, 119 to 121, Glu-150, and Asn-189; these read GAGNN and GTG.

The protein belongs to the FtsZ family. In terms of assembly, homodimer. Polymerizes to form a dynamic ring structure in a strictly GTP-dependent manner. Interacts directly with several other division proteins.

It is found in the cytoplasm. Its function is as follows. Essential cell division protein that forms a contractile ring structure (Z ring) at the future cell division site. The regulation of the ring assembly controls the timing and the location of cell division. One of the functions of the FtsZ ring is to recruit other cell division proteins to the septum to produce a new cell wall between the dividing cells. Binds GTP and shows GTPase activity. This chain is Cell division protein FtsZ, found in Mycoplasma pneumoniae (strain ATCC 29342 / M129 / Subtype 1) (Mycoplasmoides pneumoniae).